Here is a 296-residue protein sequence, read N- to C-terminus: NAD kinase (296 aa).

The Proton acceptor role is filled by D78. NAD(+)-binding positions include 78-79 (DG), 152-153 (ND), R180, D182, and Q251.

It belongs to the NAD kinase family. A divalent metal cation serves as cofactor.

It localises to the cytoplasm. The enzyme catalyses NAD(+) + ATP = ADP + NADP(+) + H(+). In terms of biological role, involved in the regulation of the intracellular balance of NAD and NADP, and is a key enzyme in the biosynthesis of NADP. Catalyzes specifically the phosphorylation on 2'-hydroxyl of the adenosine moiety of NAD to yield NADP. The sequence is that of NAD kinase from Neisseria meningitidis serogroup C (strain 053442).